Here is a 502-residue protein sequence, read N- to C-terminus: Bone morphogenetic protein receptor type-1B (502 aa).

Residues 1 to 13 (MLLRSAGKLNVGT) form the signal peptide. Residues 1–25 (MLLRSAGKLNVGTKKEDGESTAPTP) form a disordered region. Topologically, residues 14 to 126 (KKEDGESTAP…DFVDGPIHHR (113 aa)) are extracellular. Intrachain disulfides connect Cys-32–Cys-53, Cys-34–Cys-38, Cys-47–Cys-71, Cys-81–Cys-95, and Cys-96–Cys-102. A helical membrane pass occupies residues 127–148 (ALLISVTVCSLLLVLIILFCYF). Over 149–502 (RYKRQETRPR…KMSESQDIKL (354 aa)) the chain is Cytoplasmic. The GS domain occupies 174 to 203 (ESLRDLIEQSQSSGSGSGLPLLVQRTIAKQ). Positions 204–494 (IQMVKQIGKG…LRVKKTLAKM (291 aa)) constitute a Protein kinase domain. ATP-binding positions include 210–218 (IGKGRYGEV) and Lys-231. The active-site Proton acceptor is the Asp-332.

The protein belongs to the protein kinase superfamily. TKL Ser/Thr protein kinase family. TGFB receptor subfamily. In terms of assembly, interacts with high affinity with GDF5; positively regulates chondrocyte differentiation. Interacts with SCUBE3. Interacts with TSC22D1/TSC-22. Interacts with TGFBR3. Requires Mg(2+) as cofactor. It depends on Mn(2+) as a cofactor. In terms of processing, autophosphorylated.

It is found in the cell membrane. It catalyses the reaction L-threonyl-[receptor-protein] + ATP = O-phospho-L-threonyl-[receptor-protein] + ADP + H(+). The enzyme catalyses L-seryl-[receptor-protein] + ATP = O-phospho-L-seryl-[receptor-protein] + ADP + H(+). In terms of biological role, on ligand binding, forms a receptor complex consisting of two type II and two type I transmembrane serine/threonine kinases. Type II receptors phosphorylate and activate type I receptors which autophosphorylate, then bind and activate SMAD transcriptional regulators. Receptor for BMP7/OP-1 and GDF5. Positively regulates chondrocyte differentiation through GDF5 interaction. The sequence is that of Bone morphogenetic protein receptor type-1B (BMPR1B) from Homo sapiens (Human).